A 279-amino-acid polypeptide reads, in one-letter code: NAD kinase (279 aa).

Aspartate 57 serves as the catalytic Proton acceptor. Residues 57 to 58 (DG), 133 to 134 (NE), arginine 159, aspartate 161, and 172 to 177 (TAYNKS) each bind NAD(+).

This sequence belongs to the NAD kinase family. Requires a divalent metal cation as cofactor.

It localises to the cytoplasm. The catalysed reaction is NAD(+) + ATP = ADP + NADP(+) + H(+). In terms of biological role, involved in the regulation of the intracellular balance of NAD and NADP, and is a key enzyme in the biosynthesis of NADP. Catalyzes specifically the phosphorylation on 2'-hydroxyl of the adenosine moiety of NAD to yield NADP. This Streptococcus pyogenes serotype M12 (strain MGAS2096) protein is NAD kinase.